The following is a 156-amino-acid chain: SsrA-binding protein (156 aa).

The protein belongs to the SmpB family.

The protein localises to the cytoplasm. Required for rescue of stalled ribosomes mediated by trans-translation. Binds to transfer-messenger RNA (tmRNA), required for stable association of tmRNA with ribosomes. tmRNA and SmpB together mimic tRNA shape, replacing the anticodon stem-loop with SmpB. tmRNA is encoded by the ssrA gene; the 2 termini fold to resemble tRNA(Ala) and it encodes a 'tag peptide', a short internal open reading frame. During trans-translation Ala-aminoacylated tmRNA acts like a tRNA, entering the A-site of stalled ribosomes, displacing the stalled mRNA. The ribosome then switches to translate the ORF on the tmRNA; the nascent peptide is terminated with the 'tag peptide' encoded by the tmRNA and targeted for degradation. The ribosome is freed to recommence translation, which seems to be the essential function of trans-translation. The chain is SsrA-binding protein from Staphylococcus haemolyticus (strain JCSC1435).